A 677-amino-acid chain; its full sequence is MMQESGTETKSNGSAIQNGSGGSNHLLECGGLREGRSNGETPAVDIGAADLAHAQQQQQQALQVARQLLLQQQQQQQVSGLKSPKRNDKQPALQVPVSVAMMTPQVITPQQMQQILQQQVLSPQQLQVLLQQQQALMLQQQQLQEFYKKQQEQLQLQLLQQQHAGKQPKEQQQVATQQLAFQQQLLQMQQLQQQHLLSLQRQGLLTIQPGQPALPLQPLAQGMIPTELQQLWKEVTSAHTAEETTGNNHSSLDLTTTCVSSSAPSKTSLIMNPHASTNGQLSVHTPKRESLSHEEHPHSHPLYGHGVCKWPGCEAVCEDFQSFLKHLNSEHALDDRSTAQCRVQMQVVQQLELQLAKDKERLQAMMTHLHVKSTEPKAAPQPLNLVSSVTLSKSASEASPQSLPHTPTTPTAPLTPVTQGPSVITTTSMHTVGPIRRRYSDKYNVPISSADIAQNQEFYKNAEVRPPFTYASLIRQAILESPEKQLTLNEIYNWFTRMFAYFRRNAATWKNAVRHNLSLHKCFVRVENVKGAVWTVDEVEFQKRRPQKISGNPSLIKNMQSSHAYCTPLNAALQASMAENSIPLYTTASMGNPTLGNLASAIREELNGAMEHTNSNESDSSPGRSPMQAVHPVHVKEEPLDPEEAEGPLSLVTTANHSPDFDHDRDYEDEPVNEDME.

Residues 1–18 (MMQESGTETKSNGSAIQN) are compositionally biased toward polar residues. The interval 1-43 (MMQESGTETKSNGSAIQNGSGGSNHLLECGGLREGRSNGETPA) is disordered. At Ser-83 the chain carries Phosphoserine. Polar residues predominate over residues 270–283 (IMNPHASTNGQLSV). Positions 270–298 (IMNPHASTNGQLSVHTPKRESLSHEEHPH) are disordered. Residues 286 to 298 (PKRESLSHEEHPH) show a composition bias toward basic and acidic residues. Residue Lys-287 forms a Glycyl lysine isopeptide (Lys-Gly) (interchain with G-Cter in SUMO2) linkage. The C2H2-type zinc finger occupies 306–331 (GVCKWPGCEAVCEDFQSFLKHLNSEH). A leucine-zipper region spans residues 348 to 369 (VQQLELQLAKDKERLQAMMTHL). Glycyl lysine isopeptide (Lys-Gly) (interchain with G-Cter in SUMO2) cross-links involve residues Lys-372 and Lys-377. The CTBP1-binding stretch occupies residues 382 to 386 (PLNLV). Residues 390–403 (TLSKSASEASPQSL) show a composition bias toward polar residues. Positions 390–422 (TLSKSASEASPQSLPHTPTTPTAPLTPVTQGPS) are disordered. Positions 404–418 (PHTPTTPTAPLTPVT) are enriched in low complexity. A Glycyl lysine isopeptide (Lys-Gly) (interchain with G-Cter in SUMO2) cross-link involves residue Lys-442. The fork-head DNA-binding region spans 465-555 (RPPFTYASLI…PQKISGNPSL (91 aa)). Residues 611 to 677 (EHTNSNESDS…EDEPVNEDME (67 aa)) form a disordered region. Over residues 612–623 (HTNSNESDSSPG) the composition is skewed to polar residues. Thr-653 bears the Phosphothreonine mark. Ser-658 is modified (phosphoserine). A compositionally biased stretch (acidic residues) spans 667-677 (YEDEPVNEDME).

Forms homodimers and heterodimers with FOXP2 and FOXP4. Dimerization is required for DNA-binding. Self-associates. Interacts with CTBP1. Interacts with NCOR2 and AR. Interacts with FOXP2. Interacts with TBR1. Interacts with AURKA; this interaction facilitates the phosphorylation of FOXP1, which suppresses the expression of FBXL7. Interacts with ZMYM2. As to expression, isoform 8 is specifically expressed in embryonic stem cells.

Its subcellular location is the nucleus. Transcriptional repressor. Can act with CTBP1 to synergistically repress transcription but CTPBP1 is not essential. Plays an important role in the specification and differentiation of lung epithelium. Acts cooperatively with FOXP4 to regulate lung secretory epithelial cell fate and regeneration by restricting the goblet cell lineage program; the function may involve regulation of AGR2. Essential transcriptional regulator of B-cell development. Involved in regulation of cardiac muscle cell proliferation. Involved in the columnar organization of spinal motor neurons. Promotes the formation of the lateral motor neuron column (LMC) and the preganglionic motor column (PGC) and is required for respective appropriate motor axon projections. The segment-appropriate generation of spinal cord motor columns requires cooperation with other Hox proteins. Can regulate PITX3 promoter activity; may promote midbrain identity in embryonic stem cell-derived dopamine neurons by regulating PITX3. Negatively regulates the differentiation of T follicular helper cells T(FH)s. Involved in maintenance of hair follicle stem cell quiescence; the function probably involves regulation of FGF18. Represses transcription of various pro-apoptotic genes and cooperates with NF-kappa B-signaling in promoting B-cell expansion by inhibition of caspase-dependent apoptosis. Binds to CSF1R promoter elements and is involved in regulation of monocyte differentiation and macrophage functions; repression of CSF1R in monocytes seems to involve NCOR2 as corepressor. Involved in endothelial cell proliferation, tube formation and migration indicative for a role in angiogenesis; the role in neovascularization seems to implicate suppression of SEMA5B. Can negatively regulate androgen receptor signaling. Acts as a transcriptional activator of the FBXL7 promoter; this activity is regulated by AURKA. Its function is as follows. Involved in transcriptional regulation in embryonic stem cells (ESCs). Stimulates expression of transcription factors that are required for pluripotency and decreases expression of differentiation-associated genes. Has distinct DNA-binding specifities as compared to the canonical form and preferentially binds DNA with the sequence 5'-CGATACAA-3' (or closely related sequences). Promotes ESC self-renewal and pluripotency. In Homo sapiens (Human), this protein is Forkhead box protein P1 (FOXP1).